The following is a 318-amino-acid chain: Deoxyhypusine hydroxylase (318 aa).

2 HEAT-like PBS-type repeats span residues 70–96 and 103–129; these read LKHEVAYVLGQTKDLYAAPYLREVLEN and VRHEAAEALGALGDKESLPLLEKYFKE. Histidine 72, glutamate 73, histidine 105, glutamate 106, histidine 231, glutamate 232, histidine 264, and glutamate 265 together coordinate Fe cation. The stretch at 262–288 is one HEAT-like PBS-type 3 repeat; sequence VRHEAAEALGSIATDECLPVLQSFLND.

This sequence belongs to the deoxyhypusine hydroxylase family. The cofactor is Fe(2+).

The protein localises to the cytoplasm. It is found in the nucleus. The catalysed reaction is [eIF5A protein]-deoxyhypusine + AH2 + O2 = [eIF5A protein]-hypusine + A + H2O. It functions in the pathway protein modification; eIF5A hypusination. Its function is as follows. Catalyzes the hydroxylation of the N(6)-(4-aminobutyl)-L-lysine intermediate to form hypusine, an essential post-translational modification only found in mature eIF-5A factor. The sequence is that of Deoxyhypusine hydroxylase from Candida albicans (strain SC5314 / ATCC MYA-2876) (Yeast).